The primary structure comprises 37 residues: ARSRSRRSYGRGRRRGGRRRRRRRRRRRGGRRGRRSR.

A disordered region spans residues 1-37; it reads ARSRSRRSYGRGRRRGGRRRRRRRRRRRGGRRGRRSR.

Testis.

It is found in the nucleus. It localises to the chromosome. Functionally, protamines substitute for histones in the chromatin of sperm during the haploid phase of spermatogenesis. They compact sperm DNA into a highly condensed, stable and inactive complex. In Scyliorhinus canicula (Small-spotted catshark), this protein is Protamine Z3.